A 553-amino-acid chain; its full sequence is 3-amino-2-hydroxy-4-methoxybenzoate diazotase (553 aa).

Low complexity predominate over residues Ala-157–Ala-167. Residues Ala-157–Val-178 are disordered.

Belongs to the ATP-dependent AMP-binding enzyme family.

The enzyme catalyses 3-amino-2-hydroxy-4-methoxybenzoate + nitrite + ATP = cremeomycin + AMP + diphosphate + H2O. It participates in antibiotic biosynthesis. Part of a gene cluster involved in the biosynthesis of cremeomycin, a light-sensitive o-diazoquinone with antibacterial and antiproliferative effects. Catalyzes the last step of cremeomycin biosynthesis, the diazotization of 3-amino-2-hydroxy-4-methoxybenzoate (3,2,4-AHMBA) with nitrite to generate cremeomycin. The sequence is that of 3-amino-2-hydroxy-4-methoxybenzoate diazotase from Streptomyces cremeus.